Here is a 205-residue protein sequence, read N- to C-terminus: V-type ATP synthase subunit E (205 aa).

The protein belongs to the V-ATPase E subunit family.

In terms of biological role, produces ATP from ADP in the presence of a proton gradient across the membrane. The polypeptide is V-type ATP synthase subunit E (Treponema denticola (strain ATCC 35405 / DSM 14222 / CIP 103919 / JCM 8153 / KCTC 15104)).